We begin with the raw amino-acid sequence, 468 residues long: ATP synthase subunit beta (468 aa).

ATP is bound at residue 155-162 (GGAGVGKT).

Belongs to the ATPase alpha/beta chains family. In terms of assembly, F-type ATPases have 2 components, CF(1) - the catalytic core - and CF(0) - the membrane proton channel. CF(1) has five subunits: alpha(3), beta(3), gamma(1), delta(1), epsilon(1). CF(0) has three main subunits: a(1), b(2) and c(9-12). The alpha and beta chains form an alternating ring which encloses part of the gamma chain. CF(1) is attached to CF(0) by a central stalk formed by the gamma and epsilon chains, while a peripheral stalk is formed by the delta and b chains.

The protein localises to the cell membrane. It carries out the reaction ATP + H2O + 4 H(+)(in) = ADP + phosphate + 5 H(+)(out). Functionally, produces ATP from ADP in the presence of a proton gradient across the membrane. The catalytic sites are hosted primarily by the beta subunits. The polypeptide is ATP synthase subunit beta (Streptococcus pyogenes serotype M1).